A 105-amino-acid polypeptide reads, in one-letter code: Large ribosomal subunit protein uL24 (105 aa).

It belongs to the universal ribosomal protein uL24 family. Part of the 50S ribosomal subunit.

In terms of biological role, one of two assembly initiator proteins, it binds directly to the 5'-end of the 23S rRNA, where it nucleates assembly of the 50S subunit. One of the proteins that surrounds the polypeptide exit tunnel on the outside of the subunit. In Thermotoga maritima (strain ATCC 43589 / DSM 3109 / JCM 10099 / NBRC 100826 / MSB8), this protein is Large ribosomal subunit protein uL24.